A 290-amino-acid polypeptide reads, in one-letter code: Phosphoribulokinase (290 aa).

Gly-12–Ser-20 lines the ATP pocket.

It belongs to the phosphoribulokinase family.

The enzyme catalyses D-ribulose 5-phosphate + ATP = D-ribulose 1,5-bisphosphate + ADP + H(+). The protein operates within carbohydrate biosynthesis; Calvin cycle. The protein is Phosphoribulokinase (cbbP) of Nitrobacter vulgaris.